The following is a 303-amino-acid chain: Probable 5-dehydro-4-deoxyglucarate dehydratase (303 aa).

The protein belongs to the DapA family.

The catalysed reaction is 5-dehydro-4-deoxy-D-glucarate + H(+) = 2,5-dioxopentanoate + CO2 + H2O. It functions in the pathway carbohydrate acid metabolism; D-glucarate degradation; 2,5-dioxopentanoate from D-glucarate: step 2/2. The sequence is that of Probable 5-dehydro-4-deoxyglucarate dehydratase from Acinetobacter baumannii (strain AB307-0294).